The following is a 104-amino-acid chain: L-rhamnose mutarotase (104 aa).

Tyr18 lines the substrate pocket. The Proton donor role is filled by His22. Residues Tyr41 and 76–77 (WW) contribute to the substrate site.

The protein belongs to the rhamnose mutarotase family. Homodimer.

The protein localises to the cytoplasm. The catalysed reaction is alpha-L-rhamnose = beta-L-rhamnose. Its pathway is carbohydrate metabolism; L-rhamnose metabolism. In terms of biological role, involved in the anomeric conversion of L-rhamnose. This Opitutus terrae (strain DSM 11246 / JCM 15787 / PB90-1) protein is L-rhamnose mutarotase.